We begin with the raw amino-acid sequence, 663 residues long: MIDRRDENTFKLVSKYQPSGDQPQAIEQLVDNIEGGEKAQILLGATGTGKTYTMSQVISKVNKPTLVIAHNKTLAGQLYGEFKEFFPENAVEYFVSYYDYYQPEAYVPSSDTYIEKDSSVNDEIDKLRHSATSSLLERNDVIVVASVSCIYGLGSPKEYADSAVSLRPGQEISRDQLLNQLVDIQFERNDFDFQRGRFRVRGDVVEVFPASRDEHAFRIEFFGDEIDRIREIESLTGKILGEAEHLVLFPATHFVTNDEHMEASIAKIQAELASQLKVFESEGKLLEAQRLKQRTEYDIEMLREMGYTNGVENYSRHMDGRSEGEPPYTLLDFFPEDFLIMIDESHMTMGQIKGMYNGDQARKKMLVDYGFRLPSALDNRPLRREEFESHVHQIVYVSATPGDYELEQTDTIVEQIIRPTGLLDPIVEVRPTMGQMDDLLGEINLRTERGERTFITTLTKKMAEDLTDYLKEMGVKVKYMHSDIKTLERTEIIRDLRLGVFDVLIGINLLREGIDVPEVSLVAILDADKEGFLRNERGLIQTIGRAARNSQGRVIMYADKMTESMQKAIDETARRRQIQMAYNEEHGIVPQTIKKEIRDLISITKGTNTEVEEESLDYSVMTKSERQEAIKKLQKQMHEAAELLDFELAAQIRDMVLELKSMD.

The Helicase ATP-binding domain maps to aspartate 31–glutamate 271. An ATP-binding site is contributed by glycine 44 to threonine 51. The Beta-hairpin signature appears at tyrosine 97–valine 120. Residues glutamine 435–isoleucine 601 enclose the Helicase C-terminal domain. The UVR domain maps to glutamine 627–methionine 662.

This sequence belongs to the UvrB family. Forms a heterotetramer with UvrA during the search for lesions. Interacts with UvrC in an incision complex.

Its subcellular location is the cytoplasm. In terms of biological role, the UvrABC repair system catalyzes the recognition and processing of DNA lesions. A damage recognition complex composed of 2 UvrA and 2 UvrB subunits scans DNA for abnormalities. Upon binding of the UvrA(2)B(2) complex to a putative damaged site, the DNA wraps around one UvrB monomer. DNA wrap is dependent on ATP binding by UvrB and probably causes local melting of the DNA helix, facilitating insertion of UvrB beta-hairpin between the DNA strands. Then UvrB probes one DNA strand for the presence of a lesion. If a lesion is found the UvrA subunits dissociate and the UvrB-DNA preincision complex is formed. This complex is subsequently bound by UvrC and the second UvrB is released. If no lesion is found, the DNA wraps around the other UvrB subunit that will check the other stand for damage. The chain is UvrABC system protein B from Streptococcus uberis (strain ATCC BAA-854 / 0140J).